A 213-amino-acid polypeptide reads, in one-letter code: Germin-like protein 8-14 (213 aa).

A signal peptide spans 1–23 (MAKAVMMLPVLLSFLLLPFSSMA). An intrachain disulfide couples Cys29 to Cys44. One can recognise a Cupin type-1 domain in the interval 56 to 203 (HGLAAAGNTS…VTFLDDAQVK (148 aa)). N-linked (GlcNAc...) asparagine glycosylation occurs at Asn63. Residues His104, His106, Glu111, and His151 each contribute to the Mn(2+) site.

This sequence belongs to the germin family. Oligomer (believed to be a pentamer but probably hexamer). Post-translationally, phosphorylated on threonine residue.

It localises to the secreted. The protein resides in the extracellular space. Its subcellular location is the apoplast. Its function is as follows. May play a role in plant defense. Probably has no oxalate oxidase activity even if the active site is conserved. The polypeptide is Germin-like protein 8-14 (GER5) (Oryza sativa subsp. japonica (Rice)).